Reading from the N-terminus, the 393-residue chain is Formate-dependent phosphoribosylglycinamide formyltransferase (393 aa).

N(1)-(5-phospho-beta-D-ribosyl)glycinamide-binding positions include 22–23 (EL) and Glu-82. ATP is bound by residues Arg-114, Lys-155, 160–165 (SSGHGQ), 195–198 (EGFI), and Glu-203. One can recognise an ATP-grasp domain in the interval 119–308 (RLAAEELGLP…QFALHARAIL (190 aa)). Residues Glu-267 and Glu-279 each contribute to the Mg(2+) site. Residues Asp-286, Lys-356, and 363-364 (RR) each bind N(1)-(5-phospho-beta-D-ribosyl)glycinamide.

It belongs to the PurK/PurT family. Homodimer.

The enzyme catalyses N(1)-(5-phospho-beta-D-ribosyl)glycinamide + formate + ATP = N(2)-formyl-N(1)-(5-phospho-beta-D-ribosyl)glycinamide + ADP + phosphate + H(+). Its pathway is purine metabolism; IMP biosynthesis via de novo pathway; N(2)-formyl-N(1)-(5-phospho-D-ribosyl)glycinamide from N(1)-(5-phospho-D-ribosyl)glycinamide (formate route): step 1/1. In terms of biological role, involved in the de novo purine biosynthesis. Catalyzes the transfer of formate to 5-phospho-ribosyl-glycinamide (GAR), producing 5-phospho-ribosyl-N-formylglycinamide (FGAR). Formate is provided by PurU via hydrolysis of 10-formyl-tetrahydrofolate. The sequence is that of Formate-dependent phosphoribosylglycinamide formyltransferase from Haemophilus ducreyi (strain 35000HP / ATCC 700724).